A 444-amino-acid polypeptide reads, in one-letter code: Phosphoglucosamine mutase (444 aa).

Ser102 serves as the catalytic Phosphoserine intermediate. Residues Ser102, Asp241, Asp243, and Asp245 each coordinate Mg(2+). Ser102 bears the Phosphoserine mark.

This sequence belongs to the phosphohexose mutase family. It depends on Mg(2+) as a cofactor. In terms of processing, activated by phosphorylation.

It catalyses the reaction alpha-D-glucosamine 1-phosphate = D-glucosamine 6-phosphate. Functionally, catalyzes the conversion of glucosamine-6-phosphate to glucosamine-1-phosphate. The chain is Phosphoglucosamine mutase from Leptothrix cholodnii (strain ATCC 51168 / LMG 8142 / SP-6) (Leptothrix discophora (strain SP-6)).